The following is a 255-amino-acid chain: tRNA pseudouridine synthase B (255 aa).

Asp58 acts as the Nucleophile in catalysis.

It belongs to the pseudouridine synthase TruB family. Type 1 subfamily.

The enzyme catalyses uridine(55) in tRNA = pseudouridine(55) in tRNA. Functionally, responsible for synthesis of pseudouridine from uracil-55 in the psi GC loop of transfer RNAs. The polypeptide is tRNA pseudouridine synthase B (Chlorobium chlorochromatii (strain CaD3)).